The sequence spans 974 residues: UvrABC system protein A (974 aa).

Residue 34 to 41 (GLSGSGKS) coordinates ATP. 2 consecutive ABC transporter domains span residues 331 to 610 (WARS…TNSL) and 630 to 959 (ISKT…QFLK). 663 to 670 (GVSGGGKS) serves as a coordination point for ATP. The C4-type zinc-finger motif lies at 762-788 (CEACQGDGVIKIEMHFLPDVYVTCDVC).

This sequence belongs to the ABC transporter superfamily. UvrA family. Forms a heterotetramer with UvrB during the search for lesions.

Its subcellular location is the cytoplasm. Functionally, the UvrABC repair system catalyzes the recognition and processing of DNA lesions. UvrA is an ATPase and a DNA-binding protein. A damage recognition complex composed of 2 UvrA and 2 UvrB subunits scans DNA for abnormalities. When the presence of a lesion has been verified by UvrB, the UvrA molecules dissociate. This is UvrABC system protein A from Brucella suis biovar 1 (strain 1330).